A 348-amino-acid polypeptide reads, in one-letter code: tRNA N6-adenosine threonylcarbamoyltransferase (348 aa).

Residues histidine 111 and histidine 115 each coordinate Fe cation. Residues 134-138 (LVSGG), aspartate 167, glycine 180, aspartate 184, and asparagine 279 contribute to the substrate site. Aspartate 307 is a Fe cation binding site.

Belongs to the KAE1 / TsaD family. Requires Fe(2+) as cofactor.

It is found in the cytoplasm. It catalyses the reaction L-threonylcarbamoyladenylate + adenosine(37) in tRNA = N(6)-L-threonylcarbamoyladenosine(37) in tRNA + AMP + H(+). Required for the formation of a threonylcarbamoyl group on adenosine at position 37 (t(6)A37) in tRNAs that read codons beginning with adenine. Is involved in the transfer of the threonylcarbamoyl moiety of threonylcarbamoyl-AMP (TC-AMP) to the N6 group of A37, together with TsaE and TsaB. TsaD likely plays a direct catalytic role in this reaction. This chain is tRNA N6-adenosine threonylcarbamoyltransferase, found in Synechocystis sp. (strain ATCC 27184 / PCC 6803 / Kazusa).